The sequence spans 103 residues: Histone H4 (103 aa).

The span at 1–14 (MSGRGKGGKGLGKG) shows a compositional bias: gly residues. The tract at residues 1-20 (MSGRGKGGKGLGKGGAKRHR) is disordered. Residues 17 to 21 (KRHRK) mediate DNA binding.

Belongs to the histone H4 family. As to quaternary structure, the nucleosome is a histone octamer containing two molecules each of H2A, H2B, H3 and H4 assembled in one H3-H4 heterotetramer and two H2A-H2B heterodimers. The octamer wraps approximately 147 bp of DNA.

It is found in the nucleus. The protein localises to the chromosome. Functionally, core component of nucleosome. Nucleosomes wrap and compact DNA into chromatin, limiting DNA accessibility to the cellular machineries which require DNA as a template. Histones thereby play a central role in transcription regulation, DNA repair, DNA replication and chromosomal stability. DNA accessibility is regulated via a complex set of post-translational modifications of histones, also called histone code, and nucleosome remodeling. The polypeptide is Histone H4 (H41) (Physarum polycephalum (Slime mold)).